A 207-amino-acid polypeptide reads, in one-letter code: Glycerol-3-phosphate acyltransferase (207 aa).

The next 5 membrane-spanning stretches (helical) occupy residues 4 to 24, 58 to 78, 86 to 106, 120 to 140, and 162 to 182; these read VVAT…SFAV, ILTL…AQWL, ETGI…PVFH, ILLA…LIIA, and VLMN…VLLI.

The protein belongs to the PlsY family. Probably interacts with PlsX.

The protein localises to the cell inner membrane. The enzyme catalyses an acyl phosphate + sn-glycerol 3-phosphate = a 1-acyl-sn-glycero-3-phosphate + phosphate. The protein operates within lipid metabolism; phospholipid metabolism. Its function is as follows. Catalyzes the transfer of an acyl group from acyl-phosphate (acyl-PO(4)) to glycerol-3-phosphate (G3P) to form lysophosphatidic acid (LPA). This enzyme utilizes acyl-phosphate as fatty acyl donor, but not acyl-CoA or acyl-ACP. This chain is Glycerol-3-phosphate acyltransferase, found in Ralstonia pickettii (strain 12J).